Consider the following 872-residue polypeptide: Sine oculis-binding protein homolog (872 aa).

The segment covering 1 to 14 (MAEMEKEGRPPENK) has biased composition (basic and acidic residues). Positions 1 to 26 (MAEMEKEGRPPENKRSRKPAHPVKRE) are disordered. 2 consecutive FCS-type zinc fingers follow at residues 142-180 (DDVS…KCFA) and 216-256 (FKNN…KCLN). Disordered regions lie at residues 308 to 354 (RRKA…KSMP), 411 to 484 (FIRG…PGAP), and 550 to 619 (KPPN…GRSE). A compositionally biased stretch (polar residues) spans 319 to 344 (GQSQGPGPSASTTVSPSDTANCSVTK). Residues 417 to 433 (HHASNPNSPLSNPMLPG) are compositionally biased toward low complexity. Positions 460 to 484 (IHPPSTPTMPGNPPGLLPPPPPGAP) are enriched in pro residues. Positions 620 to 624 (VVDLT) match the SUMO interaction motif 1 (SIM); mediates the binding to polysumoylated substrates motif. Position 629 is a phosphoserine (Ser629). The SUMO interaction motif 2 (SIM); mediates the binding to polysumoylated substrates signature appears at 651 to 655 (VIDLT). Residue Lys675 forms a Glycyl lysine isopeptide (Lys-Gly) (interchain with G-Cter in SUMO2) linkage. Ser697 bears the Phosphoserine mark. The interval 728–770 (AAEGAKGAEPPPEQPPPPPPPPPAPPKKLLSPEEPAVSELESV) is disordered. The span at 736–753 (EPPPEQPPPPPPPPPAPP) shows a compositional bias: pro residues.

It belongs to the SOBP family. In terms of assembly, interacts (via SIM domains) with SUMO1 and SUMO2.

Implicated in development of the cochlea. The protein is Sine oculis-binding protein homolog of Bos taurus (Bovine).